The primary structure comprises 314 residues: tRNA dimethylallyltransferase (314 aa).

12–19 (GPTAAGKS) serves as a coordination point for ATP. 14–19 (TAAGKS) lines the substrate pocket. 3 interaction with substrate tRNA regions span residues 37-40 (DSAT), 161-165 (QRIQR), and 245-250 (RCVGYR).

It belongs to the IPP transferase family. As to quaternary structure, monomer. It depends on Mg(2+) as a cofactor.

It carries out the reaction adenosine(37) in tRNA + dimethylallyl diphosphate = N(6)-dimethylallyladenosine(37) in tRNA + diphosphate. Functionally, catalyzes the transfer of a dimethylallyl group onto the adenine at position 37 in tRNAs that read codons beginning with uridine, leading to the formation of N6-(dimethylallyl)adenosine (i(6)A). The sequence is that of tRNA dimethylallyltransferase from Bordetella petrii (strain ATCC BAA-461 / DSM 12804 / CCUG 43448).